A 320-amino-acid chain; its full sequence is Cytochrome f (320 aa).

The first 35 residues, methionine 1–alanine 35, serve as a signal peptide directing secretion. 4 residues coordinate heme: tyrosine 36, cysteine 56, cysteine 59, and histidine 60. A helical membrane pass occupies residues valine 286–lysine 306.

Belongs to the cytochrome f family. The 4 large subunits of the cytochrome b6-f complex are cytochrome b6, subunit IV (17 kDa polypeptide, petD), cytochrome f and the Rieske protein, while the 4 small subunits are PetG, PetL, PetM and PetN. The complex functions as a dimer. It depends on heme as a cofactor.

The protein localises to the plastid. The protein resides in the chloroplast thylakoid membrane. Functionally, component of the cytochrome b6-f complex, which mediates electron transfer between photosystem II (PSII) and photosystem I (PSI), cyclic electron flow around PSI, and state transitions. In Oryza nivara (Indian wild rice), this protein is Cytochrome f.